Consider the following 536-residue polypeptide: Heat shock factor protein 2 (536 aa).

Glycyl lysine isopeptide (Lys-Gly) (interchain with G-Cter in SUMO2) cross-links involve residues Lys-2 and Lys-82. A DNA-binding region spans residues Val-7–Ser-112. Positions Lys-108 to Arg-122 match the Nuclear localization signal motif. The segment at Asn-119–Val-192 is hydrophobic repeat HR-A/B. Residues Lys-135, Lys-139, Lys-151, Lys-210, Lys-218, and Lys-237 each participate in a glycyl lysine isopeptide (Lys-Gly) (interchain with G-Cter in SUMO2) cross-link. The Nuclear localization signal motif lies at Lys-195 to Lys-210. The disordered stretch occupies residues Gln-300–Ser-337. Positions Ser-311–Ser-325 are enriched in low complexity. Residues Ala-326 to Ser-337 are compositionally biased toward polar residues. Positions Leu-360–Ile-385 are hydrophobic repeat HR-C. Positions Asn-407–Pro-438 are disordered. A compositionally biased stretch (basic and acidic residues) spans Glu-429 to Pro-438.

The protein belongs to the HSF family. In terms of assembly, DNA-binding homotrimer in stressed or heat shocked cells, otherwise found as a homodimer.

The protein resides in the cytoplasm. It is found in the nucleus. In terms of biological role, DNA-binding protein that specifically binds heat shock promoter elements (HSE) and activates transcription. In higher eukaryotes, HSF is unable to bind to the HSE unless the cells are heat shocked. The polypeptide is Heat shock factor protein 2 (HSF2) (Homo sapiens (Human)).